Here is an 871-residue protein sequence, read N- to C-terminus: DNA mismatch repair protein MutS (871 aa).

An ATP-binding site is contributed by 621-628; sequence GPNMAGKS.

This sequence belongs to the DNA mismatch repair MutS family.

This protein is involved in the repair of mismatches in DNA. It is possible that it carries out the mismatch recognition step. This protein has a weak ATPase activity. In Geobacter sulfurreducens (strain ATCC 51573 / DSM 12127 / PCA), this protein is DNA mismatch repair protein MutS.